The chain runs to 801 residues: MSLLHIAVILPLIFVLIIPILYRFFKRIHLGWFVLPVPIVIFIYMLTLIKTTMSGNTVMKTLNWMPHFGMNFDLYLDGLGLLFSLLISGIGSLVVLYSIGYLNKSEQLGNFYCYLLLFMGAMLGVVLSDNVIILYLFWELTSFSSFLLISFWRERQASIYGAQKSLIITVFGGLSLLGGIILLAIPTQSFSIQYMIQHASEIQNSPFFIFAMILIMIGAFTKSAQFPFYIWLPDAMEAPTPVSAYLHSATMVKAGLYLIARMTPIFAASQGWIWTVTLVGLITLFWASLNATKQQDLKGILAFSTVSQLGMIMAMLGIGAISYHYQGDDSKIYAAAFTAAIFHLINHATFKGALFMITGAVDHSTGTRDVKKLGGLLTIMPISFTITVITALSMAGVPPFNGFLSKESFLETTFTASQANLFSVDTLGYLFPIIGIVGSVFTFVYSIKFIMHIFFGQYKPEQLPKKAHEVSILMLLSPAILATLVIVFGLFPGILTNSIIEPATSSINHTVIDDVEFHMFHGLTPAFLSTLVIYILGILLIVTFSYWVKLLQRQPGKLTFNYWYNRSANVIPNYSEKMTNSYVTDYSRNNLVIIFGALILLTFVTVFSVPFNINFKDVSPIRIFEVCIVILLLSAAFLILFAKSRLFNIIMLSAVGYAVSVLFIFFKAPDLALTQFVVESISTALFLLCFYHLPNLNRYNEKRSFQLTNALIAGGVGLSVIIIGLIAYGNRHFESISKFYQEHVYDLAHGKNMVNVILVDFRGMDTLFESSVLGIAGLAVYTMIKLRKKRQTQGNEVKNHE.

Transmembrane regions (helical) follow at residues 1-21 (MSLL…IPIL), 28-48 (IHLG…MLTL), 79-99 (LGLL…LYSI), 117-137 (LFMG…LYLF), 166-186 (LIIT…LAIP), 206-226 (PFFI…SAQF), 265-285 (IFAA…ITLF), 300-320 (ILAF…GIGA), 337-357 (FTAA…LFMI), 373-393 (LGGL…TALS), 427-447 (LGYL…VYSI), 472-492 (ILML…GLFP), 522-542 (GLTP…LLIV), 591-611 (LVII…SVPF), 623-643 (IFEV…LFAK), 646-666 (LFNI…FIFF), 671-691 (LALT…LCFY), 707-727 (LTNA…GLIA), and 764-784 (MDTL…YTMI).

This sequence belongs to the CPA3 antiporters (TC 2.A.63) subunit A family. In terms of assembly, may form a heterooligomeric complex that consists of seven subunits: mnhA1, mnhB1, mnhC1, mnhD1, mnhE1, mnhF1 and mnhG1.

It is found in the cell membrane. Its function is as follows. Mnh complex is a Na(+)/H(+) antiporter involved in Na(+) excretion. This is Na(+)/H(+) antiporter subunit A1 (mnhA1) from Staphylococcus aureus (strain bovine RF122 / ET3-1).